The following is a 160-amino-acid chain: Putative pre-16S rRNA nuclease (160 aa).

Belongs to the YqgF nuclease family.

It localises to the cytoplasm. Could be a nuclease involved in processing of the 5'-end of pre-16S rRNA. The protein is Putative pre-16S rRNA nuclease of Cereibacter sphaeroides (strain ATCC 17025 / ATH 2.4.3) (Rhodobacter sphaeroides).